The chain runs to 254 residues: Alcohol dehydrogenase (254 aa).

10–33 provides a ligand contact to NAD(+); the sequence is FVAGLGGIGLDTSREIVKSGPKNL. Ser138 contacts substrate. The active-site Proton acceptor is Tyr151.

Belongs to the short-chain dehydrogenases/reductases (SDR) family. In terms of assembly, homodimer.

It carries out the reaction a primary alcohol + NAD(+) = an aldehyde + NADH + H(+). The catalysed reaction is a secondary alcohol + NAD(+) = a ketone + NADH + H(+). This chain is Alcohol dehydrogenase (Adh1), found in Drosophila lacicola (Fruit fly).